The chain runs to 390 residues: Zinc transporter 8 (390 aa).

Residues 1–25 (MRTNTTATVLLAAAVALLLATAARG) form the signal peptide. N4 is a glycosylation site (N-linked (GlcNAc...) asparagine). At 26 to 50 (DGGDGGCGKEDAAAGRDRARARGLK) the chain is on the extracellular side. A helical membrane pass occupies residues 51–71 (IAAFFSILVCGALGCGLPSLG). Topologically, residues 72–82 (RHVPALRPDGD) are cytoplasmic. The chain crosses the membrane as a helical span at residues 83 to 103 (VFFLVKAFAAGVILATGFIHI). Over 104-124 (LPDAFDNLTDDCLPAGGPWKE) the chain is Extracellular. N110 carries N-linked (GlcNAc...) asparagine glycosylation. A helical transmembrane segment spans residues 125-145 (FPFAGFGAMVGAIGTLVVDTL). Topologically, residues 146–235 (ATGYFTRALS…DDKETTLRHR (90 aa)) are cytoplasmic. Residues 165–199 (VADEEKQSAAATQQHNHHHNHHVVGDGGGGGEEHE) form a disordered region. A helical transmembrane segment spans residues 236–256 (VISQVLELGIVVHSVIIGISL). The Extracellular portion of the chain corresponds to 257–267 (GASQNPETIKP). Residues 268–288 (LVVALSFHQMFEGMGLGGCIV) traverse the membrane as a helical segment. Residues 289–296 (QAKFKVRS) are Cytoplasmic-facing. A helical transmembrane segment spans residues 297–317 (IVTMVLFFCLTTPVGIAVGVG). Residues 318–329 (ISSVYNESSPTA) are Extracellular-facing. A glycan (N-linked (GlcNAc...) asparagine) is linked at N323. The helical transmembrane segment at 330-350 (LVVEGILNSVAAGILIYMALV) threads the bilayer. Over 351-369 (DLLAEDFMNPRVQSKGKLQ) the chain is Cytoplasmic. The chain crosses the membrane as a helical span at residues 370 to 390 (LGINLAMLAGAGLMSMLAKWA).

The protein belongs to the ZIP transporter (TC 2.A.5) family.

It localises to the cell membrane. Its function is as follows. Zinc transporter that may mediate zinc uptake from the rhizosphere and may be responsible for the translocation of zinc within the plant. The sequence is that of Zinc transporter 8 (ZIP8) from Oryza sativa subsp. japonica (Rice).